The chain runs to 191 residues: MYILFEGIDTCGKSTQMELLTQKHPGIITTHEPGGTAFGQQAREILLSDSLRSKRAELLLFLADRAEHYEEVVEPNHDKIVVSDRGFVSGIGYALANGDFDFDELVALNRFALKDHFPDRIILFMTDMETLKQRISEKELDGIELRGLEYLLRVQEHMKESILKLGIPHLFIDATDSIENIHQSILTYLKV.

An ATP-binding site is contributed by 7–14 (GIDTCGKS).

This sequence belongs to the thymidylate kinase family.

It carries out the reaction dTMP + ATP = dTDP + ADP. Functionally, phosphorylation of dTMP to form dTDP in both de novo and salvage pathways of dTTP synthesis. This is Thymidylate kinase from Sulfurovum sp. (strain NBC37-1).